Reading from the N-terminus, the 293-residue chain is Formamidopyrimidine-DNA glycosylase (293 aa).

The active-site Schiff-base intermediate with DNA is the Pro-2. The Proton donor role is filled by Glu-3. The active-site Proton donor; for beta-elimination activity is Lys-58. DNA-binding residues include His-104, Arg-123, and Arg-166. The FPG-type zinc-finger motif lies at 257–293 (QVYDREGDKCRTPACKGAVKRFTQNGRSTFWCPVCQT). The active-site Proton donor; for delta-elimination activity is the Arg-283.

This sequence belongs to the FPG family. As to quaternary structure, monomer. Zn(2+) is required as a cofactor.

The catalysed reaction is Hydrolysis of DNA containing ring-opened 7-methylguanine residues, releasing 2,6-diamino-4-hydroxy-5-(N-methyl)formamidopyrimidine.. It catalyses the reaction 2'-deoxyribonucleotide-(2'-deoxyribose 5'-phosphate)-2'-deoxyribonucleotide-DNA = a 3'-end 2'-deoxyribonucleotide-(2,3-dehydro-2,3-deoxyribose 5'-phosphate)-DNA + a 5'-end 5'-phospho-2'-deoxyribonucleoside-DNA + H(+). In terms of biological role, involved in base excision repair of DNA damaged by oxidation or by mutagenic agents. Acts as a DNA glycosylase that recognizes and removes damaged bases. Has a preference for oxidized purines, such as 7,8-dihydro-8-oxoguanine (8-oxoG). Has AP (apurinic/apyrimidinic) lyase activity and introduces nicks in the DNA strand. Cleaves the DNA backbone by beta-delta elimination to generate a single-strand break at the site of the removed base with both 3'- and 5'-phosphates. The chain is Formamidopyrimidine-DNA glycosylase from Nitrobacter winogradskyi (strain ATCC 25391 / DSM 10237 / CIP 104748 / NCIMB 11846 / Nb-255).